Here is a 437-residue protein sequence, read N- to C-terminus: Anhydromevalonate phosphate decarboxylase (437 aa).

Mn(2+) contacts are provided by N136 and E199. D247 functions as the Proton acceptor in the catalytic mechanism.

This sequence belongs to the UbiD family. Requires prenylated FMN as cofactor. Mn(2+) serves as cofactor.

The enzyme catalyses (2E)-3-methyl-5-phosphooxypent-2-enoate + H(+) = isopentenyl phosphate + CO2. It participates in isoprenoid biosynthesis; isopentenyl diphosphate biosynthesis via mevalonate pathway. Functionally, catalyzes the conversion of trans-anhydromevalonate 5-phosphate (tAHMP) into isopentenyl phosphate. Involved in the archaeal mevalonate (MVA) pathway, which provides fundamental precursors for isoprenoid biosynthesis, such as isopentenyl diphosphate (IPP) and dimethylallyl diphosphate (DMAPP). This Aeropyrum pernix (strain ATCC 700893 / DSM 11879 / JCM 9820 / NBRC 100138 / K1) protein is Anhydromevalonate phosphate decarboxylase.